A 185-amino-acid chain; its full sequence is Ribosome-recycling factor (185 aa).

It belongs to the RRF family.

The protein resides in the cytoplasm. In terms of biological role, responsible for the release of ribosomes from messenger RNA at the termination of protein biosynthesis. May increase the efficiency of translation by recycling ribosomes from one round of translation to another. The sequence is that of Ribosome-recycling factor from Bacillus cereus (strain ATCC 10987 / NRS 248).